The following is a 204-amino-acid chain: Redox-sensing transcriptional repressor Rex 2 (204 aa).

Positions methionine 17 to leucine 53 form a DNA-binding region, H-T-H motif.

Belongs to the transcriptional regulatory Rex family. As to quaternary structure, homodimer.

Its subcellular location is the cytoplasm. In terms of biological role, modulates transcription in response to changes in cellular NADH/NAD(+) redox state. This is Redox-sensing transcriptional repressor Rex 2 (rex2) from Thermotoga maritima (strain ATCC 43589 / DSM 3109 / JCM 10099 / NBRC 100826 / MSB8).